We begin with the raw amino-acid sequence, 205 residues long: Ras-related protein RABD1 (205 aa).

Residue serine 2 is modified to N-acetylserine. GTP is bound by residues 15-23 (GDSSVGKSC), 33-40 (YIDSYIST), 63-67 (DTAGQ), 121-124 (NKND), and 151-153 (SAK). Positions 37 to 45 (YISTIGVDF) match the Effector region motif. Composition is skewed to polar residues over residues 174-186 (GSQTNANKTSGPG) and 194-205 (PIQQNNGGCCGQ). The interval 174–205 (GSQTNANKTSGPGTVQMKGQPIQQNNGGCCGQ) is disordered. Residues cysteine 202 and cysteine 203 are each lipidated (S-geranylgeranyl cysteine).

The protein belongs to the small GTPase superfamily. Rab family. Does not interact with GC5. Interacts with XI-2/MYA2.

It is found in the golgi apparatus. Its subcellular location is the trans-Golgi network membrane. It localises to the golgi apparatus membrane. Protein transport. Regulator of membrane traffic from the Golgi apparatus towards the endoplasmic reticulum (ER). This chain is Ras-related protein RABD1 (RABD1), found in Arabidopsis thaliana (Mouse-ear cress).